A 528-amino-acid chain; its full sequence is Keratin, type II cytoskeletal 78 (528 aa).

The segment at 1 to 104 (MSLSPCRARR…DPQFQVVRTQ (104 aa)) is head. The disordered stretch occupies residues 23–45 (VGRGRTGFSSRSLSSFGGCRGGS). A compositionally biased stretch (low complexity) spans 24–39 (GRGRTGFSSRSLSSFG). The segment at 105-140 (ETQQIRVLNNQFASFIDKVRFLEQQNKVLETKWHLL) is coil 1A. The region spanning 105–418 (ETQQIRVLNN…RLLEGEECRM (314 aa)) is the IF rod domain. Positions 141–159 (QQQGLSDRPQGLESFFEAY) are linker 1. Residues 160 to 252 (LVRLRTQLEE…LYEEELGQLQ (93 aa)) are coil 1B. The segment at 253–275 (TQASDMSVVLSMDNNRCLDFRDL) is linker 12. A coil 2 region spans residues 276-415 (IAEVRARYEE…TYRRLLEGEE (140 aa)). Residues 416–528 (CRMSGECASQ…ESSLKTSVTY (113 aa)) are tail.

The protein belongs to the intermediate filament family. As to quaternary structure, heterotetramer of two type I and two type II keratins.

The protein is Keratin, type II cytoskeletal 78 (KRT78) of Bos taurus (Bovine).